Reading from the N-terminus, the 282-residue chain is Aldo-keto reductase BQ2027_MB2996 (282 aa).

The active-site Proton donor is Tyr57. Residues Leu197, Val235, Arg237, Ser238, Ala239, Arg243, Ser246, Asn247, and Arg273 each contribute to the NADPH site.

It belongs to the aldo/keto reductase family.

This is Aldo-keto reductase BQ2027_MB2996 from Mycobacterium bovis (strain ATCC BAA-935 / AF2122/97).